The following is a 161-amino-acid chain: Small ribosomal subunit protein uS9 (161 aa).

This sequence belongs to the universal ribosomal protein uS9 family.

This chain is Small ribosomal subunit protein uS9, found in Rickettsia canadensis (strain McKiel).